The chain runs to 500 residues: NF-kappa-B inhibitor cactus (500 aa).

The segment covering 1–43 (MPSPTKAAEAATKATATSDCSCSAASVEQRAPSNAANPSSSLA) has biased composition (low complexity). Disordered stretches follow at residues 1-148 (MPSP…MRLK) and 171-212 (LNNL…APPS). S45 bears the Phosphoserine; by PKC mark. Positions 69 to 86 (NETSDSGFISGPQSSQIF) are enriched in polar residues. Acidic residues predominate over residues 118-130 (IIDEEEDQEEQEK). S144 is subject to Phosphoserine; by PKC. Polar residues predominate over residues 171–189 (LNNLGQSSSTQITGRSKVQ). T183 is subject to Phosphothreonine; by PKC. The segment covering 190–212 (SSTASTANANPSGSGATSSAPPS) has biased composition (low complexity). ANK repeat units lie at residues 229–261 (DGDT…LLNI), 265–294 (VAQT…EPTV), 298–327 (HGNT…ATEI), 361–390 (DGER…DINA), and 395–424 (SGRT…KLNL). 2 positions are modified to phosphothreonine; by PKC: T293 and T319. At S395 the chain carries Phosphoserine; by PKC.

The protein belongs to the NF-kappa-B inhibitor family. In terms of assembly, phosphorylated isoform A binds to dorsal (dl); inhibits dl translocation to the nucleus and therefore from binding to DNA. In vitro, interacts with IKKbeta. Interacts with cactin and kappa-B-Ras. Post-translationally, activated IKKbeta phosphorylates cact. In terms of tissue distribution, expressed in ovary (at protein level).

The protein resides in the cytoplasm. Involved in the formation of the dorsoventral pattern. It inhibits nuclear translocation of the dorsal morphogen in the dorsal region of the embryo. Acts as a negative regulator of the NF-kappa-B (rel) signaling pathway. Cact is degraded by IKKbeta, this is essential for NF-kappa-B (rel) activation. This Drosophila melanogaster (Fruit fly) protein is NF-kappa-B inhibitor cactus (cact).